The chain runs to 452 residues: Glycine receptor subunit alpha-2 (452 aa).

A signal peptide spans 1–27 (MNRQLVNILTALFAFFLETNHFRTAFC). Over 28-256 (KDHDSRSGKQ…KFHLERQMGY (229 aa)) the chain is Extracellular. Asn72 carries an N-linked (GlcNAc...) asparagine glycan. Arg99 is a binding site for glycine. Arg99 provides a ligand contact to strychnine. An N-linked (GlcNAc...) asparagine glycan is attached at Asn103. Ser163 provides a ligand contact to glycine. An intrachain disulfide couples Cys172 to Cys186. Glu226 and Glu228 together coordinate Zn(2+). Residues Cys232 and Cys243 are joined by a disulfide bond. Thr238 provides a ligand contact to glycine. His249 contacts Zn(2+). The helical transmembrane segment at 257–278 (YLIQMYIPSLLIVILSWVSFWI) threads the bilayer. The Cytoplasmic segment spans residues 279 to 283 (NMDAA). The helical transmembrane segment at 284-304 (PARVALGITTVLTMTTQSSGS) threads the bilayer. Topologically, residues 305 to 315 (RASLPKVSYVK) are extracellular. The chain crosses the membrane as a helical span at residues 316 to 336 (AIDIWMAVCLLFVFAALLEYA). At 337 to 420 (AVNFVSRQHK…FVDRAKRIDT (84 aa)) the chain is on the cytoplasmic side. A helical membrane pass occupies residues 421–441 (ISRAAFPLAFLIFNIFYWITY). The Extracellular segment spans residues 442–452 (KIIRHEDVHKK).

The protein belongs to the ligand-gated ion channel (TC 1.A.9) family. Glycine receptor (TC 1.A.9.3) subfamily. GLRA2 sub-subfamily. In terms of assembly, interacts with GLRB. Heteropentamer composed of GLRA2 and GLRB. Functional GLRB-GLRA2 heteropentamers contain four GLRA2 subunits and one GLRB subunit, although alternative subunit composition cannot be excluded. Homopentamer (in vitro). Both homopentamers and heteropentamers form functional ion channels, but their characteristics are subtly different.

Its subcellular location is the postsynaptic cell membrane. It is found in the synapse. It localises to the cell membrane. The protein resides in the cell projection. The enzyme catalyses chloride(in) = chloride(out). With respect to regulation, channel opening is triggered by extracellular glycine. Channel opening is also triggered by taurine and beta-alanine. Inhibited by strychnine. Inhibited by picrotoxin. Channel activity is potentiated by 10-100 uM Zn(2+). Channel activity is marginally increased by 50 mM ethanol; it is strongly increased by a combination of 0.5 uM Zn(2+) and 50 mM ethanol. Channel activity is inhibited by 100-1000 uM Zn(2+). In terms of biological role, subunit of heteromeric glycine-gated chloride channels. Plays a role in synaptic plasticity. Contributes to the generation of inhibitory postsynaptic currents, and is involved in the down-regulation of neuronal excitability. Plays a role in cellular responses to ethanol. In Homo sapiens (Human), this protein is Glycine receptor subunit alpha-2.